We begin with the raw amino-acid sequence, 2395 residues long: Helicase ssl-1 (2395 aa).

The span at 1 to 12 (MPATPVRASSTR) shows a compositional bias: low complexity. The segment at 1 to 62 (MPATPVRASS…EKKKKKTSDD (62 aa)) is disordered. The 74-residue stretch at 227-300 (LPKCVEPERN…IKEKRKMCAG (74 aa)) folds into the HSA domain. The span at 354-363 (LVSSSKSPSI) shows a compositional bias: polar residues. 2 disordered regions span residues 354-404 (LVSS…VRQE) and 444-504 (EKLE…HGVL). 3 stretches are compositionally biased toward basic and acidic residues: residues 365–375 (SDRDDKDEEFK), 394–404 (KSQKKEDVRQE), and 444–462 (EKLE…NEEK). A coiled-coil region spans residues 388-464 (TIANAEKSQK…ACGDNEEKME (77 aa)). Residues 470–490 (SSDAQKPSTSSSDLTAEQLQD) are compositionally biased toward polar residues. The Helicase ATP-binding domain maps to 570–735 (VTLYEKNLNG…WSLMHFLMPT (166 aa)). 583 to 590 (DEMGLGKT) contributes to the ATP binding site. Residues 963–982 (AQPLQNGNSIPQNAPNRPQT) are disordered. The 147-residue stretch at 1196–1342 (LLRQLYLYKH…ELAIDEAGFT (147 aa)) folds into the Helicase C-terminal domain. The stretch at 1452-1476 (KPEFEEECKEAEALIDQKREEWDKN) forms a coiled coil. 5 disordered regions span residues 1615-1706 (ESAA…EEPD), 1977-2073 (SIQH…RRNA), 2092-2143 (QSGK…PQQR), 2276-2306 (QMRS…RPLV), and 2350-2395 (MQMP…PPQN). Composition is skewed to low complexity over residues 1647–1669 (QQPT…QQQQ) and 1981–1995 (LQSS…QNLQ). Residues 1996 to 2019 (NSHNSEQRNNVQNMHQNQYNSSQN) are compositionally biased toward polar residues. Composition is skewed to low complexity over residues 2051–2073 (LVQQ…RRNA) and 2092–2114 (QSGK…SSND). The span at 2115 to 2129 (GQGGASTVGGGGGGS) shows a compositional bias: gly residues. A compositionally biased stretch (low complexity) spans 2130–2142 (QQPHQQQQQQPQQ). Gly residues predominate over residues 2281-2299 (NGGGVGGQGGLQGGPGGPQ). The span at 2361-2377 (QQQAPPQSSQQASQQAP) shows a compositional bias: low complexity.

Belongs to the SNF2/RAD54 helicase family. SWR1 subfamily.

It is found in the nucleus. Functionally, probable catalytic component of a chromatin-remodeling complex which mediates the ATP-dependent exchange of histone H2A variant H2AV/htz-1 for H2A, leading to transcriptional regulation of selected genes by chromatin remodeling. Involved in foregut development, and may be involved in vulval development. In Caenorhabditis elegans, this protein is Helicase ssl-1 (ssl-1).